The following is a 791-amino-acid chain: Protein CLASP-2 (791 aa).

Composition is skewed to low complexity over residues 259–271 (ASDA…SVNS), 323–334 (RTPNTRPMTTRT), and 372–381 (SQPGSRNGSP). Disordered regions lie at residues 259-283 (ASDA…SKLS), 315-391 (TRMT…TGTL), and 422-454 (AMNT…PQKS). Residues 422–434 (AMNTAKESLGQPS) show a composition bias toward polar residues.

The protein belongs to the CLASP family. In terms of assembly, interacts with hcp-1 and hcp-2.

It is found in the cytoplasm. The protein resides in the cytoskeleton. Its subcellular location is the microtubule organizing center. It localises to the centrosome. The protein localises to the chromosome. It is found in the centromere. The protein resides in the kinetochore. Its subcellular location is the spindle. Probable microtubule plus-end tracking protein that promotes the stabilization of dynamic microtubules. Required for the formation of mitotic and meiotic spindles. Specifically promotes the polymerization of kinetochore-bound microtubules. Also required for cytoplasmic streaming. The protein is Protein CLASP-2 (cls-2) of Caenorhabditis briggsae.